A 122-amino-acid chain; its full sequence is Large ribosomal subunit protein bL12 (122 aa).

It belongs to the bacterial ribosomal protein bL12 family. In terms of assembly, homodimer. Part of the ribosomal stalk of the 50S ribosomal subunit. Forms a multimeric L10(L12)X complex, where L10 forms an elongated spine to which 2 to 4 L12 dimers bind in a sequential fashion. Binds GTP-bound translation factors.

In terms of biological role, forms part of the ribosomal stalk which helps the ribosome interact with GTP-bound translation factors. Is thus essential for accurate translation. In Cellvibrio japonicus (strain Ueda107) (Pseudomonas fluorescens subsp. cellulosa), this protein is Large ribosomal subunit protein bL12.